The chain runs to 168 residues: 2-oxo-4-hydroxy-4-carboxy-5-ureidoimidazoline decarboxylase (168 aa).

Histidine 70 acts as the Proton donor; for OHCU decarboxylase activity in catalysis. The span at histidine 70 to methionine 79 shows a compositional bias: basic and acidic residues. Residues histidine 70 to aspartate 93 are disordered. Substrate is bound by residues proline 71, serine 83–glutamine 87, and phenylalanine 118–valine 122.

It belongs to the OHCU decarboxylase family.

The catalysed reaction is 5-hydroxy-2-oxo-4-ureido-2,5-dihydro-1H-imidazole-5-carboxylate + H(+) = (S)-allantoin + CO2. The protein operates within purine metabolism; urate degradation; (S)-allantoin from urate: step 3/3. Catalyzes the stereoselective decarboxylation of 2-oxo-4-hydroxy-4-carboxy-5-ureidoimidazoline (OHCU) to (S)-allantoin. The polypeptide is 2-oxo-4-hydroxy-4-carboxy-5-ureidoimidazoline decarboxylase (Haloferax volcanii (strain ATCC 29605 / DSM 3757 / JCM 8879 / NBRC 14742 / NCIMB 2012 / VKM B-1768 / DS2) (Halobacterium volcanii)).